We begin with the raw amino-acid sequence, 82 residues long: MTFNPNIATHTLEAEGLRCPEPVMMVRKTIRTMLDGEVLLVTADDPSTTRDIPSFCRFMDHQLLGAQIDQLPYQYLIKKGLA.

Cysteine 19 acts as the Cysteine persulfide intermediate in catalysis.

The protein belongs to the sulfur carrier protein TusA family.

It is found in the cytoplasm. In terms of biological role, sulfur carrier protein which probably makes part of a sulfur-relay system. The protein is Sulfur carrier protein TusA of Vibrio cholerae serotype O1 (strain ATCC 39541 / Classical Ogawa 395 / O395).